The chain runs to 325 residues: S-adenosylmethionine carrier 1, chloroplastic/mitochondrial (325 aa).

A chloroplast and mitochondrion-targeting transit peptide spans 1–38 (MAPLTLSVDVKSSSATSHDVSKRVMQSSQLKINKGFFA). Solcar repeat units follow at residues 52 to 124 (RTLF…TKQK), 133 to 215 (LSAV…LCLG), and 228 to 310 (ENAL…TKRT). A run of 5 helical transmembrane segments spans residues 55–75 (FEGF…LYPI), 97–117 (YSGL…FVGV), 132–152 (HLSA…ASLI), 230–250 (ALIG…LDVI), and 285–305 (GIGP…GVLE).

The protein belongs to the mitochondrial carrier (TC 2.A.29) family. In terms of tissue distribution, expressed in seedlings, cotyledons, leaves and flowers. Lower levels of expression in stems and roots. Not detected in senescent leaves, petals and pollen grains.

It is found in the mitochondrion membrane. Its subcellular location is the plastid. The protein resides in the chloroplast membrane. Its activity is regulated as follows. Inhibited strongly by tannic acid, bromocresol purple, mercuric chloride, mersalyl, p-hydroxymercuribenzoate, S-adenosylhomocysteine, S-adenosylcysteine and adenosylornithine, and to a lesser extent by N-ethylmaleimide, bathophenanthroline and pyridoxal-5'-P. In terms of biological role, transporter involved in exchange reactions through membranes. Has a low uniporter activity. Specifically mediates the transport of S-adenosylmethionine (SAM) and its closest analogs. Probably involved in the uptake of SAM in exchange for S-adenosylhomocysteine (SAHC), which is produced from SAM in the mitochondrial matrix and plastidial stroma by methyltransferase activities. The chain is S-adenosylmethionine carrier 1, chloroplastic/mitochondrial (SAMC1) from Arabidopsis thaliana (Mouse-ear cress).